The primary structure comprises 229 residues: ATP-dependent Clp protease proteolytic subunit 1 (229 aa).

Ser129 serves as the catalytic Nucleophile. The active site involves His154.

The protein belongs to the peptidase S14 family. Fourteen ClpP subunits assemble into 2 heptameric rings which stack back to back to give a disk-like structure with a central cavity, resembling the structure of eukaryotic proteasomes.

Its subcellular location is the cytoplasm. The enzyme catalyses Hydrolysis of proteins to small peptides in the presence of ATP and magnesium. alpha-casein is the usual test substrate. In the absence of ATP, only oligopeptides shorter than five residues are hydrolyzed (such as succinyl-Leu-Tyr-|-NHMec, and Leu-Tyr-Leu-|-Tyr-Trp, in which cleavage of the -Tyr-|-Leu- and -Tyr-|-Trp bonds also occurs).. Cleaves peptides in various proteins in a process that requires ATP hydrolysis. Has a chymotrypsin-like activity. Plays a major role in the degradation of misfolded proteins. In Thermosynechococcus vestitus (strain NIES-2133 / IAM M-273 / BP-1), this protein is ATP-dependent Clp protease proteolytic subunit 1.